We begin with the raw amino-acid sequence, 188 residues long: Elongation factor P (188 aa).

This sequence belongs to the elongation factor P family.

Its subcellular location is the cytoplasm. It participates in protein biosynthesis; polypeptide chain elongation. Its function is as follows. Involved in peptide bond synthesis. Stimulates efficient translation and peptide-bond synthesis on native or reconstituted 70S ribosomes in vitro. Probably functions indirectly by altering the affinity of the ribosome for aminoacyl-tRNA, thus increasing their reactivity as acceptors for peptidyl transferase. In Aeromonas hydrophila subsp. hydrophila (strain ATCC 7966 / DSM 30187 / BCRC 13018 / CCUG 14551 / JCM 1027 / KCTC 2358 / NCIMB 9240 / NCTC 8049), this protein is Elongation factor P.